Consider the following 85-residue polypeptide: Large ribosomal subunit protein bL27 (85 aa).

Positions Met1–Val23 are disordered.

The protein belongs to the bacterial ribosomal protein bL27 family.

This chain is Large ribosomal subunit protein bL27, found in Aliarcobacter butzleri (strain RM4018) (Arcobacter butzleri).